A 342-amino-acid polypeptide reads, in one-letter code: Heat-inducible transcription repressor HrcA (342 aa).

The protein belongs to the HrcA family.

In terms of biological role, negative regulator of class I heat shock genes (grpE-dnaK-dnaJ and groELS operons). Prevents heat-shock induction of these operons. This is Heat-inducible transcription repressor HrcA from Methylibium petroleiphilum (strain ATCC BAA-1232 / LMG 22953 / PM1).